We begin with the raw amino-acid sequence, 113 residues long: Cytochrome c (113 aa).

Alanine 1 carries the post-translational modification N-acetylalanine. Cysteine 22, cysteine 25, and histidine 26 together coordinate heme c. N6,N6,N6-trimethyllysine is present on lysine 80. Methionine 88 serves as a coordination point for heme c. Position 94 is an N6,N6,N6-trimethyllysine (lysine 94).

The protein belongs to the cytochrome c family. Binds 1 heme c group covalently per subunit.

Its subcellular location is the mitochondrion intermembrane space. In terms of biological role, electron carrier protein. The oxidized form of the cytochrome c heme group can accept an electron from the heme group of the cytochrome c1 subunit of cytochrome reductase. Cytochrome c then transfers this electron to the cytochrome oxidase complex, the final protein carrier in the mitochondrial electron-transport chain. This chain is Cytochrome c, found in Ginkgo biloba (Ginkgo).